Here is a 116-residue protein sequence, read N- to C-terminus: Iron-sulfur cluster insertion protein ErpA (116 aa).

Iron-sulfur cluster contacts are provided by C44, C108, and C110.

Belongs to the HesB/IscA family. As to quaternary structure, homodimer. It depends on iron-sulfur cluster as a cofactor.

Its function is as follows. Required for insertion of 4Fe-4S clusters for at least IspG. The polypeptide is Iron-sulfur cluster insertion protein ErpA (Francisella philomiragia subsp. philomiragia (strain ATCC 25017 / CCUG 19701 / FSC 153 / O#319-036)).